The sequence spans 472 residues: UDP-N-acetylmuramoyl-L-alanyl-D-glutamate--2,6-diaminopimelate ligase (472 aa).

Residue Ser-21 coordinates UDP-N-acetyl-alpha-D-muramoyl-L-alanyl-D-glutamate. Residue 99 to 105 participates in ATP binding; it reads GTNGKTS. Residues 143 to 144, Ser-170, Gln-176, and Arg-178 each bind UDP-N-acetyl-alpha-D-muramoyl-L-alanyl-D-glutamate; that span reads TT. N6-carboxylysine is present on Lys-210. Meso-2,6-diaminopimelate is bound by residues Arg-367, 391-394, Gly-440, and Glu-444; that span reads DNPR. The Meso-diaminopimelate recognition motif motif lies at 391–394; sequence DNPR.

It belongs to the MurCDEF family. MurE subfamily. Requires Mg(2+) as cofactor. Post-translationally, carboxylation is probably crucial for Mg(2+) binding and, consequently, for the gamma-phosphate positioning of ATP.

It localises to the cytoplasm. The catalysed reaction is UDP-N-acetyl-alpha-D-muramoyl-L-alanyl-D-glutamate + meso-2,6-diaminopimelate + ATP = UDP-N-acetyl-alpha-D-muramoyl-L-alanyl-gamma-D-glutamyl-meso-2,6-diaminopimelate + ADP + phosphate + H(+). It participates in cell wall biogenesis; peptidoglycan biosynthesis. In terms of biological role, catalyzes the addition of meso-diaminopimelic acid to the nucleotide precursor UDP-N-acetylmuramoyl-L-alanyl-D-glutamate (UMAG) in the biosynthesis of bacterial cell-wall peptidoglycan. This Anaplasma marginale (strain St. Maries) protein is UDP-N-acetylmuramoyl-L-alanyl-D-glutamate--2,6-diaminopimelate ligase.